Consider the following 336-residue polypeptide: tRNA N6-adenosine threonylcarbamoyltransferase (336 aa).

Residues His-114 and His-118 each contribute to the Fe cation site. Substrate is bound by residues 136-140, Asp-169, Gly-182, Asp-186, and Asn-275; that span reads LVSGG. Asp-301 is a binding site for Fe cation.

Belongs to the KAE1 / TsaD family. Fe(2+) serves as cofactor.

Its subcellular location is the cytoplasm. It catalyses the reaction L-threonylcarbamoyladenylate + adenosine(37) in tRNA = N(6)-L-threonylcarbamoyladenosine(37) in tRNA + AMP + H(+). Its function is as follows. Required for the formation of a threonylcarbamoyl group on adenosine at position 37 (t(6)A37) in tRNAs that read codons beginning with adenine. Is involved in the transfer of the threonylcarbamoyl moiety of threonylcarbamoyl-AMP (TC-AMP) to the N6 group of A37, together with TsaE and TsaB. TsaD likely plays a direct catalytic role in this reaction. This Streptococcus pneumoniae (strain Taiwan19F-14) protein is tRNA N6-adenosine threonylcarbamoyltransferase.